The primary structure comprises 253 residues: MADHATLIDEANLETAAPGPAALETASAPLVRGKWLKNDMPRERLIEQGASVLSDTELIVLILGSGLPGHDVFDVARTLLDRFGSLRAMLDATYTDFADLRGIGPAKKTQLLAIMEMARRSLVDKMRMRSLINSPEAVENYLRLRIGGRPQEIFVSLFLDARHRLIRCEESAQGTLTRMAVYPREIVRRALSLNAASLIVAHNHPSGAVQPSASDCRLTHTLRDALTLIDVQLVDHLVIGTDSVYSFARAGWP.

Residues 131-253 form the MPN domain; sequence LINSPEAVEN…VYSFARAGWP (123 aa). Zn(2+) contacts are provided by His202, His204, and Asp215. The JAMM motif motif lies at 202–215; sequence HNHPSGAVQPSASD.

It belongs to the UPF0758 family.

The polypeptide is UPF0758 protein Bxeno_A3578 (Paraburkholderia xenovorans (strain LB400)).